The primary structure comprises 955 residues: Protein translocase subunit SecA (955 aa).

ATP is bound by residues Gln-87, 105–109 (GEGKT), and Asp-494. The tract at residues 861-955 (ASPAPAAPRP…KKAPRTKRKR (95 aa)) is disordered. The span at 874 to 888 (QEAAQQAQGTAAPSA) shows a compositional bias: low complexity. The segment covering 943–955 (SKGKKAPRTKRKR) has biased composition (basic residues).

The protein belongs to the SecA family. Monomer and homodimer. Part of the essential Sec protein translocation apparatus which comprises SecA, SecYEG and auxiliary proteins SecDF. Other proteins may also be involved.

Its subcellular location is the cell membrane. The protein localises to the cytoplasm. The enzyme catalyses ATP + H2O + cellular proteinSide 1 = ADP + phosphate + cellular proteinSide 2.. In terms of biological role, part of the Sec protein translocase complex. Interacts with the SecYEG preprotein conducting channel. Has a central role in coupling the hydrolysis of ATP to the transfer of proteins into and across the cell membrane, serving as an ATP-driven molecular motor driving the stepwise translocation of polypeptide chains across the membrane. This Rhodococcus jostii (strain RHA1) protein is Protein translocase subunit SecA.